The primary structure comprises 71 residues: Guanine nucleotide-binding protein G(I)/G(S)/G(O) subunit gamma-2 (71 aa).

Ala-2 bears the N-acetylalanine mark. The residue at position 68 (Cys-68) is a Cysteine methyl ester. The S-geranylgeranyl cysteine moiety is linked to residue Cys-68. Residues 69 to 71 constitute a propeptide, removed in mature form; the sequence is AIL.

It belongs to the G protein gamma family. G proteins are composed of 3 units, alpha, beta and gamma. In this context, interacts with GNB2. The heterodimer formed by GNB1 and GNG2 interacts with ARHGEF5. The heterodimer formed by GNB1 and GNG2 interacts with GRK2. Component of the TAS2R14-GNAI1 complex, consisting of TAS2R14, GNAI1, GNB1 and GNG2. Forms complexes with TAS2R14 and G-proteins; these complexes play a role in the perception of bitterness. Component of the TAS2R14-GNAT3 complex, consisting of TAS2R14, GNAT3, GNB1 and GNG2. Component of the TAS2R14-GNAS2 complex, consisting of TAS2R14, GNAS2, GNB1 and GNG2. In terms of tissue distribution, adrenal gland and brain.

The protein resides in the cell membrane. Its function is as follows. Guanine nucleotide-binding proteins (G proteins) are involved as a modulator or transducer in various transmembrane signaling systems. The beta and gamma chains are required for the GTPase activity, for replacement of GDP by GTP, and for G protein-effector interaction. This Bos taurus (Bovine) protein is Guanine nucleotide-binding protein G(I)/G(S)/G(O) subunit gamma-2 (GNG2).